A 1032-amino-acid chain; its full sequence is Serine/threonine-protein kinase ppk31 (1032 aa).

In terms of domain architecture, PAS spans 3 to 72 (NPEQLKRILS…KATDNLFRKS (70 aa)). The region spanning 528 to 877 (FILLKEINRG…YQEIKKHPFF (350 aa)) is the Protein kinase domain. ATP contacts are provided by residues 534 to 542 (INRGAYGRV) and Lys-557. Asp-652 (proton acceptor) is an active-site residue. The disordered stretch occupies residues 938-963 (PKATPADSGTETSNSAAFSASEEETT). Over residues 947–957 (TETSNSAAFSA) the composition is skewed to low complexity.

Belongs to the protein kinase superfamily. Ser/Thr protein kinase family.

It localises to the cytoplasm. The catalysed reaction is L-seryl-[protein] + ATP = O-phospho-L-seryl-[protein] + ADP + H(+). It catalyses the reaction L-threonyl-[protein] + ATP = O-phospho-L-threonyl-[protein] + ADP + H(+). In terms of biological role, has a role in meiosis. The chain is Serine/threonine-protein kinase ppk31 (ppk31) from Schizosaccharomyces pombe (strain 972 / ATCC 24843) (Fission yeast).